Reading from the N-terminus, the 387-residue chain is Phosphoglycerate kinase (387 aa).

Residues 21–23 (DLN), arginine 36, 59–62 (HLGR), arginine 113, and arginine 146 contribute to the substrate site. Residues lysine 197, glutamate 314, and 340–343 (GGDT) contribute to the ATP site.

The protein belongs to the phosphoglycerate kinase family. As to quaternary structure, monomer.

The protein localises to the cytoplasm. The enzyme catalyses (2R)-3-phosphoglycerate + ATP = (2R)-3-phospho-glyceroyl phosphate + ADP. It functions in the pathway carbohydrate degradation; glycolysis; pyruvate from D-glyceraldehyde 3-phosphate: step 2/5. The protein is Phosphoglycerate kinase of Pseudomonas putida (strain ATCC 700007 / DSM 6899 / JCM 31910 / BCRC 17059 / LMG 24140 / F1).